We begin with the raw amino-acid sequence, 340 residues long: Dihydroorotate dehydrogenase (quinone) (340 aa).

FMN is bound by residues 61-65 and T85; that span reads AGLDK. K65 serves as a coordination point for substrate. 110 to 114 serves as a coordination point for substrate; the sequence is NRMGF. 2 residues coordinate FMN: N138 and N171. Residue N171 coordinates substrate. The Nucleophile role is filled by S174. N176 is a binding site for substrate. Residues K216 and T244 each contribute to the FMN site. Residue 245-246 participates in substrate binding; the sequence is NT. FMN-binding positions include G267, G296, and 317–318; that span reads YS.

This sequence belongs to the dihydroorotate dehydrogenase family. Type 2 subfamily. In terms of assembly, monomer. FMN serves as cofactor.

It localises to the cell membrane. It carries out the reaction (S)-dihydroorotate + a quinone = orotate + a quinol. It functions in the pathway pyrimidine metabolism; UMP biosynthesis via de novo pathway; orotate from (S)-dihydroorotate (quinone route): step 1/1. In terms of biological role, catalyzes the conversion of dihydroorotate to orotate with quinone as electron acceptor. This Ectopseudomonas mendocina (strain ymp) (Pseudomonas mendocina) protein is Dihydroorotate dehydrogenase (quinone).